A 470-amino-acid polypeptide reads, in one-letter code: ATP synthase subunit beta (470 aa).

Position 155–162 (155–162 (GGAGVGKT)) interacts with ATP.

Belongs to the ATPase alpha/beta chains family. F-type ATPases have 2 components, CF(1) - the catalytic core - and CF(0) - the membrane proton channel. CF(1) has five subunits: alpha(3), beta(3), gamma(1), delta(1), epsilon(1). CF(0) has three main subunits: a(1), b(2) and c(9-12). The alpha and beta chains form an alternating ring which encloses part of the gamma chain. CF(1) is attached to CF(0) by a central stalk formed by the gamma and epsilon chains, while a peripheral stalk is formed by the delta and b chains.

Its subcellular location is the cell membrane. It catalyses the reaction ATP + H2O + 4 H(+)(in) = ADP + phosphate + 5 H(+)(out). Produces ATP from ADP in the presence of a proton gradient across the membrane. The catalytic sites are hosted primarily by the beta subunits. This is ATP synthase subunit beta from Staphylococcus aureus (strain MW2).